Here is a 432-residue protein sequence, read N- to C-terminus: Enolase (432 aa).

(2R)-2-phosphoglycerate is bound at residue Q167. The Proton donor role is filled by E209. Residues D246, E290, and D317 each contribute to the Mg(2+) site. (2R)-2-phosphoglycerate-binding residues include K342, R371, S372, and K393. K342 functions as the Proton acceptor in the catalytic mechanism.

It belongs to the enolase family. As to quaternary structure, component of the RNA degradosome, a multiprotein complex involved in RNA processing and mRNA degradation. Requires Mg(2+) as cofactor.

Its subcellular location is the cytoplasm. It is found in the secreted. The protein resides in the cell surface. The catalysed reaction is (2R)-2-phosphoglycerate = phosphoenolpyruvate + H2O. The protein operates within carbohydrate degradation; glycolysis; pyruvate from D-glyceraldehyde 3-phosphate: step 4/5. In terms of biological role, catalyzes the reversible conversion of 2-phosphoglycerate (2-PG) into phosphoenolpyruvate (PEP). It is essential for the degradation of carbohydrates via glycolysis. The chain is Enolase from Klebsiella pneumoniae subsp. pneumoniae (strain ATCC 700721 / MGH 78578).